Here is a 517-residue protein sequence, read N- to C-terminus: 6-phosphogluconate dehydrogenase, decarboxylating (517 aa).

NADP(+) contacts are provided by residues 35-40 (GLAVMG), 58-60 (NRT), 100-102 (VKA), and Asn128. Substrate-binding positions include Asn128 and 154 to 156 (SGG). The Proton acceptor role is filled by Lys208. Residue 211–212 (HN) participates in substrate binding. Catalysis depends on Glu215, which acts as the Proton donor. Positions 216, 286, 313, 474, and 480 each coordinate substrate.

It belongs to the 6-phosphogluconate dehydrogenase family. In terms of assembly, homodimer.

The catalysed reaction is 6-phospho-D-gluconate + NADP(+) = D-ribulose 5-phosphate + CO2 + NADPH. Its pathway is carbohydrate degradation; pentose phosphate pathway; D-ribulose 5-phosphate from D-glucose 6-phosphate (oxidative stage): step 3/3. Its function is as follows. Catalyzes the oxidative decarboxylation of 6-phosphogluconate to ribulose 5-phosphate and CO(2), with concomitant reduction of NADP to NADPH. In Candida albicans (Yeast), this protein is 6-phosphogluconate dehydrogenase, decarboxylating (DOR14).